A 225-amino-acid chain; its full sequence is Biosynthetic peptidoglycan transglycosylase (225 aa).

The chain crosses the membrane as a helical span at residues Val-8–Val-28.

This sequence belongs to the glycosyltransferase 51 family.

The protein localises to the cell inner membrane. It catalyses the reaction [GlcNAc-(1-&gt;4)-Mur2Ac(oyl-L-Ala-gamma-D-Glu-L-Lys-D-Ala-D-Ala)](n)-di-trans,octa-cis-undecaprenyl diphosphate + beta-D-GlcNAc-(1-&gt;4)-Mur2Ac(oyl-L-Ala-gamma-D-Glu-L-Lys-D-Ala-D-Ala)-di-trans,octa-cis-undecaprenyl diphosphate = [GlcNAc-(1-&gt;4)-Mur2Ac(oyl-L-Ala-gamma-D-Glu-L-Lys-D-Ala-D-Ala)](n+1)-di-trans,octa-cis-undecaprenyl diphosphate + di-trans,octa-cis-undecaprenyl diphosphate + H(+). It functions in the pathway cell wall biogenesis; peptidoglycan biosynthesis. Peptidoglycan polymerase that catalyzes glycan chain elongation from lipid-linked precursors. The sequence is that of Biosynthetic peptidoglycan transglycosylase from Acinetobacter baumannii (strain ATCC 17978 / DSM 105126 / CIP 53.77 / LMG 1025 / NCDC KC755 / 5377).